A 245-amino-acid polypeptide reads, in one-letter code: MATRLQFENNCEVGVFSKLTNAYCLVAIGGSENFYSAFESELADVIPIVKTSIGGTRIIGRLCAGNKNGLLVPHTTTDQELQHLRNSLPDQVVVQRIDERLSALGNCIACNDYVALAHTDLDKETEEIIADVLGVEVFRQTIAGNILVGSYCALSNKGGMVHPHTSVEDLEELSTLLQVPLVAGTVNRGSEVIAAGMTVNDWTSFCGSDTTATELSVIDSIFKLREAQPSSIVDEMRKSLIDTYV.

This sequence belongs to the eIF-6 family. As to quaternary structure, monomer. Associates with the 60S ribosomal subunit.

The protein localises to the cytoplasm. It is found in the nucleus. The protein resides in the nucleolus. In terms of biological role, binds to the 60S ribosomal subunit and prevents its association with the 40S ribosomal subunit to form the 80S initiation complex in the cytoplasm. May also be involved in ribosome biogenesis. This Arabidopsis thaliana (Mouse-ear cress) protein is Eukaryotic translation initiation factor 6-2.